The following is a 254-amino-acid chain: Nickel import ATP-binding protein NikD (254 aa).

An ABC transporter domain is found at 2–241; that stretch reads PQQIELRDIA…PKHAVTRSLV (240 aa). ATP is bound at residue 36–43; that stretch reads GGSGSGKS.

It belongs to the ABC transporter superfamily. Nickel importer (TC 3.A.1.5.3) family. As to quaternary structure, the complex is composed of two ATP-binding proteins (NikD and NikE), two transmembrane proteins (NikB and NikC) and a solute-binding protein (NikA).

Its subcellular location is the cell inner membrane. The catalysed reaction is Ni(2+)(out) + ATP + H2O = Ni(2+)(in) + ADP + phosphate + H(+). In terms of biological role, part of the ABC transporter complex NikABCDE involved in nickel import. Responsible for energy coupling to the transport system. The chain is Nickel import ATP-binding protein NikD from Shigella dysenteriae serotype 1 (strain Sd197).